A 155-amino-acid polypeptide reads, in one-letter code: Pathogenesis-related protein B (155 aa).

Belongs to the BetVI family.

The chain is Pathogenesis-related protein B (PCPR1-3) from Petroselinum crispum (Parsley).